A 571-amino-acid polypeptide reads, in one-letter code: Ubiquitin-like-specific protease 1C (571 aa).

The tract at residues serine 221 to valine 260 is disordered. Residues glutamate 222–asparagine 233 show a composition bias toward basic and acidic residues. Catalysis depends on residues histidine 426, aspartate 449, and cysteine 512.

Belongs to the peptidase C48 family.

The protein localises to the nucleus. The protein resides in the nucleoplasm. Its function is as follows. Protease that catalyzes two essential functions in the SUMO pathway: processing of full-length SUMOs to their mature forms and deconjugation of SUMO from targeted proteins. Cleaves precursors of SUM1 and SUM2, but not of SUM3 or SUM5. Able to release SUM1 and SUM2 from conjugates, but unable to cleave SUM3. Protease activity mainly directed at deconjugating SUM1 and SUM2 from their target proteins. Regulates salt stress responses and flowering time. Redundant with ULP1D. This chain is Ubiquitin-like-specific protease 1C (ULP1C), found in Arabidopsis thaliana (Mouse-ear cress).